We begin with the raw amino-acid sequence, 1245 residues long: Structural polyprotein (1245 aa).

The interval Met1 to Met106 is disordered. Residues Gly37–Arg70 are host transcription inhibition. The segment covering Leu38–Val49 has biased composition (polar residues). The Nuclear localization signal signature appears at Pro63 to Pro100. A compositionally biased stretch (basic residues) spans Pro67–Met106. The binding to the viral RNA stretch occupies residues Lys86–Leu115. Residues Pro100–Arg114 are ribosome-binding. In terms of domain architecture, Peptidase S3 spans Arg114 to Trp264. The active-site Charge relay system is His141. The short motif at Ile146–Phe156 is the Nuclear export signal element. Residues Thr157–Tyr162 form an interaction with spike glycoprotein E2 region. Asp163 (charge relay system) is an active-site residue. The dimerization of the capsid protein stretch occupies residues Pro185–Ala195. Ser215 (charge relay system) is an active-site residue. The interval Asp221–Arg225 is dimerization of the capsid protein. The interaction with spike glycoprotein E2 stretch occupies residues Ser249 to Thr253. Residues Ser265–Val279 form a functions as an uncleaved signal peptide for the precursor of protein E3/E2 region. Asn278 is a glycosylation site (N-linked (GlcNAc...) asparagine; by host). 4 disulfides stabilise this stretch: Cys283–Cys289, Cys480–Cys594, Cys529–Cys554, and Cys531–Cys548. At Ser329–Arg690 the chain is on the extracellular side. N-linked (GlcNAc...) asparagine; by host glycosylation occurs at Asn524. An N-linked (GlcNAc...) asparagine; by host glycan is attached at Asn646. Residues Glu682 to Leu730 adopt a coiled-coil conformation. Residues His691–Cys718 form a helical membrane-spanning segment. The tract at residues Lys719–Glu723 is interaction with the capsid protein. Topologically, residues Lys719 to Ala751 are cytoplasmic. S-palmitoyl cysteine; by host attachment occurs at residues Cys724, Cys744, and Cys745. Cysteines 724 and 745 form a disulfide. The Extracellular segment spans residues Glu752–Ser763. Residues Asn764–Met784 form a helical membrane-spanning segment. A topological domain (cytoplasmic) is located at residue Arg785. Residues Cys786 to Ala806 form a helical membrane-spanning segment. The Extracellular segment spans residues Tyr807–Ser1214. Intrachain disulfides connect Cys855–Cys920, Cys868–Cys900, Cys869–Cys902, and Cys874–Cys884. An E1 fusion peptide loop region spans residues Val890 to Ser907. Asn945 and Asn1051 each carry an N-linked (GlcNAc...) asparagine; by host glycan. Intrachain disulfides connect Cys1065-Cys1077, Cys1107-Cys1182, Cys1112-Cys1186, and Cys1134-Cys1176. Positions Thr1196–Arg1245 form a coiled coil. Residues Trp1215–Met1239 form a helical membrane-spanning segment. At Leu1240–Arg1245 the chain is on the cytoplasmic side.

It belongs to the alphavirus structural polyprotein family. Homomultimer. Interacts with host karyopherin KPNA4; this interaction allows the nuclear import of the viral capsid protein. Interacts with spike glycoprotein E2. Interacts with host IRAK1; the interaction leads to inhibition of IRAK1-dependent signaling. In terms of assembly, the precursor of protein E3/E2 and E1 form a heterodimer shortly after synthesis. As to quaternary structure, the precursor of protein E3/E2 and E1 form a heterodimer shortly after synthesis. Processing of the precursor of protein E3/E2 into E2 and E3 results in a heterodimer of the spike glycoproteins E2 and E1. Spike at virion surface are constituted of a trimer of E2-E1 heterodimers. After target cell attachment and endocytosis, E1 change conformation to form homotrimers. E2-E1 heterodimers interact with host VLDLR or LRP8/APOER2 to mediate viral entry. Interacts with 6K protein. Interacts with spike glycoprotein E1. Processing of the precursor of protein E3/E2 into E2 and E3 results in a heterodimer of the spike glycoproteins E2 and E1. Spike at virion surface are constituted of a trimer of E2-E1 heterodimers. E2-E1 heterodimers interact with host VLDLR or LRP8/APOER2 to mediate viral entry. Interacts with 6K protein. Interacts with the capsid protein. In terms of assembly, oligomer. Interacts with spike glycoprotein E1. Interacts with spike glycoprotein E2. Post-translationally, specific enzymatic cleavages in vivo yield mature proteins. Capsid protein is auto-cleaved during polyprotein translation, unmasking a signal peptide at the N-terminus of the precursor of E3/E2. The remaining polyprotein is then targeted to the host endoplasmic reticulum, where host signal peptidase cleaves it into pE2, 6K and E1 proteins. pE2 is further processed to mature E3 and E2 by host furin in trans-Golgi vesicle. In terms of processing, palmitoylated via thioester bonds. These palmitoylations may induce disruption of the C-terminus transmembrane. This would result in the reorientation of E2 C-terminus from lumenal to cytoplasmic side. N-glycosylated. Post-translationally, palmitoylated via thioester bonds.

Its subcellular location is the virion. The protein resides in the host cytoplasm. It is found in the host cell membrane. It localises to the host nucleus. The protein localises to the virion membrane. Its subcellular location is the host Golgi apparatus. The protein resides in the host trans-Golgi network. It is found in the host endoplasmic reticulum. The enzyme catalyses Autocatalytic release of the core protein from the N-terminus of the togavirus structural polyprotein by hydrolysis of a -Trp-|-Ser- bond.. With respect to regulation, the channel activity is blocked by 5-N, N-Hexamethylene amiloride. Its function is as follows. Forms an icosahedral capsid with a T=4 symmetry composed of 240 copies of the capsid protein surrounded by a lipid membrane through which penetrate 80 spikes composed of trimers of E1-E2 heterodimers. The capsid protein binds to the viral RNA genome at a site adjacent to a ribosome binding site for viral genome translation following genome release. Possesses a protease activity that results in its autocatalytic cleavage from the nascent structural protein. Following its self-cleavage, the capsid protein transiently associates with ribosomes, and within several minutes the protein binds to viral RNA and rapidly assembles into icosahedric core particles. The resulting nucleocapsid eventually associates with the cytoplasmic domain of the spike glycoprotein E2 at the cell membrane, leading to budding and formation of mature virions. In case of infection, new virions attach to target cells and after clathrin-mediated endocytosis their membrane fuses with the host endosomal membrane. This leads to the release of the nucleocapsid into the cytoplasm, followed by an uncoating event necessary for the genomic RNA to become accessible. The uncoating might be triggered by the interaction of capsid proteins with ribosomes. Binding of ribosomes would release the genomic RNA since the same region is genomic RNA-binding and ribosome-binding. Specifically inhibits interleukin-1 receptor-associated kinase 1/IRAK1-dependent signaling during viral entry, representing a means by which the alphaviruses may evade innate immune detection and activation prior to viral gene expression. In terms of biological role, provides the signal sequence for the translocation of the precursor of protein E3/E2 to the host endoplasmic reticulum. Furin-cleaved E3 remains associated with spike glycoprotein E1 and mediates pH protection of the latter during the transport via the secretory pathway. After virion release from the host cell, the assembly protein E3 is gradually released in the extracellular space. Functionally, plays a role in viral attachment to target host cell, by binding to the cell receptors VLDLR or LRP8/APOER2. Synthesized as a pE2 precursor which is processed by furin at the cell membrane just before virion budding, giving rise to E2-E1 heterodimer. The pE2-E1 heterodimer is stable, whereas E2-E1 is unstable and dissociate at low pH. pE2 is processed at the last step, presumably to avoid E1 fusion activation before its final export to cell surface. E2 C-terminus contains a transitory transmembrane that would be disrupted by palmitoylation, resulting in reorientation of the C-terminal tail from lumenal to cytoplasmic side. This step is critical since E2 C-terminus is involved in budding by interacting with capsid proteins. This release of E2 C-terminus in cytoplasm occurs lately in protein export, and precludes premature assembly of particles at the endoplasmic reticulum membrane. Acts as a viroporin that participates in virus glycoprotein processing and transport to the plasma membrane, cell permeabilization and budding of viral particles. Disrupts the calcium homeostasis of the cell, probably at the endoplasmic reticulum level resulting in the increased levels of cytoplasmic calcium. Because of its lipophilic properties, the 6K protein is postulated to influence the selection of lipids that interact with the transmembrane domains of the glycoproteins, which, in turn, affects the deformability of the bilayer required for the extreme curvature that occurs as budding proceeds. Present in low amount in virions, about 3% compared to viral glycoproteins. Its function is as follows. Class II viral fusion protein. Fusion activity is inactive as long as E1 is bound to E2 in mature virion. After virus attachment to target cell via host VLDLR or LRP8/APOER2 and endocytosis, acidification of the endosome induces dissociation of E1/E2 heterodimer and concomitant trimerization of the E1 subunits. This E1 trimer is fusion active, and promotes release of viral nucleocapsid in cytoplasm after endosome and viral membrane fusion. Efficient fusion requires the presence of cholesterol and sphingolipid in the target membrane. The chain is Structural polyprotein from Acrocephalus scirpaceus (Eurasian reed-warbler).